A 454-amino-acid chain; its full sequence is Chromosomal replication initiator protein DnaA (454 aa).

Residues 1–71 (MTKEQWGQLQ…HEVRQEDPAV (71 aa)) form a domain I, interacts with DnaA modulators region. The domain II stretch occupies residues 71-112 (VRRLRFAVPSHVNATTKPARPAQATAPRAPAEKTPRSTLSTA). Positions 82-108 (VNATTKPARPAQATAPRAPAEKTPRST) are disordered. Residues 84–99 (ATTKPARPAQATAPRA) show a composition bias toward low complexity. The domain III, AAA+ region stretch occupies residues 113 to 334 (PLDARFTFDN…GALTRLCAFA (222 aa)). ATP contacts are provided by G157, G159, K160, and T161. Residues 335–454 (SLVGREIDME…LELLRRALEE (120 aa)) form a domain IV, binds dsDNA region.

The protein belongs to the DnaA family. Oligomerizes as a right-handed, spiral filament on DNA at oriC.

The protein localises to the cytoplasm. In terms of biological role, plays an essential role in the initiation and regulation of chromosomal replication. ATP-DnaA binds to the origin of replication (oriC) to initiate formation of the DNA replication initiation complex once per cell cycle. Binds the DnaA box (a 9 base pair repeat at the origin) and separates the double-stranded (ds)DNA. Forms a right-handed helical filament on oriC DNA; dsDNA binds to the exterior of the filament while single-stranded (ss)DNA is stabiized in the filament's interior. The ATP-DnaA-oriC complex binds and stabilizes one strand of the AT-rich DNA unwinding element (DUE), permitting loading of DNA polymerase. After initiation quickly degrades to an ADP-DnaA complex that is not apt for DNA replication. Binds acidic phospholipids. The sequence is that of Chromosomal replication initiator protein DnaA from Roseobacter denitrificans (strain ATCC 33942 / OCh 114) (Erythrobacter sp. (strain OCh 114)).